We begin with the raw amino-acid sequence, 774 residues long: Fe(3+) dicitrate transport protein FecA (774 aa).

The signal sequence occupies residues 1-33; that stretch reads MTPLRVFRKTTPLVNTIRLSLLPLAGLSFSAFA. Positions 56–63 match the TonB box motif; it reads FTLSVDAS. Positions 129–250 constitute a TBDR plug domain; sequence DVFEHAGARD…VGGVVNFVTR (122 aa). The TBDR beta-barrel domain occupies 255–774; that stretch reads DFGIEAGVEG…TLYMQGSLKF (520 aa). Positions 757–774 match the TonB C-terminal box motif; it reads GIYAGQPRTLYMQGSLKF.

This sequence belongs to the TonB-dependent receptor family. As to quaternary structure, interacts (via periplasmic N-terminus) with FecR (via periplasmic C-terminus).

The protein resides in the cell outer membrane. FecA is the outer membrane receptor protein in the Fe(3+) dicitrate transport system. The polypeptide is Fe(3+) dicitrate transport protein FecA (fecA) (Escherichia coli (strain K12)).